Reading from the N-terminus, the 150-residue chain is Ribosomal RNA large subunit methyltransferase H (150 aa).

S-adenosyl-L-methionine-binding positions include Ala-100 and 118 to 123 (LSEMTF).

Belongs to the RNA methyltransferase RlmH family. Homodimer.

The protein localises to the cytoplasm. It carries out the reaction pseudouridine(1915) in 23S rRNA + S-adenosyl-L-methionine = N(3)-methylpseudouridine(1915) in 23S rRNA + S-adenosyl-L-homocysteine + H(+). Functionally, specifically methylates the pseudouridine at position 1915 (m3Psi1915) in 23S rRNA. In Helicobacter pylori (strain HPAG1), this protein is Ribosomal RNA large subunit methyltransferase H.